The primary structure comprises 164 residues: Transcriptional regulator MraZ (164 aa).

2 consecutive SpoVT-AbrB domains span residues 7-60 and 83-126; these read HFTN…EIDE and SEIL…EPGR. The interval 141–164 is disordered; the sequence is LRKQLSSRPVAPDAQPPRPHGARE. Positions 154 to 164 are enriched in pro residues; the sequence is AQPPRPHGARE.

Belongs to the MraZ family. As to quaternary structure, forms oligomers.

The protein localises to the cytoplasm. Its subcellular location is the nucleoid. The protein is Transcriptional regulator MraZ of Beijerinckia indica subsp. indica (strain ATCC 9039 / DSM 1715 / NCIMB 8712).